Consider the following 73-residue polypeptide: U-scoloptoxin(22)-Cw1a (73 aa).

The N-terminal stretch at 1 to 24 is a signal peptide; that stretch reads MRRFVFLAFVLVLFVIANLDSSSA.

Belongs to the scoloptoxin-22 family. Contains 1 disulfide bond. In terms of tissue distribution, expressed by the venom gland.

The protein localises to the secreted. This is U-scoloptoxin(22)-Cw1a from Cormocephalus westwoodi (Westwood's green centipede).